The sequence spans 528 residues: Berberine bridge enzyme-like 17 (528 aa).

Positions 1 to 19 (MKEVVYVLLLVLLVSVSDA) are cleaved as a signal peptide. N-linked (GlcNAc...) asparagine glycosylation is found at Asn20, Asn35, Asn52, and Asn72. Residues Cys32 and Cys94 are joined by a disulfide bond. The FAD-binding PCMH-type domain occupies 69–246 (LNPNDTKLIA…LSWKINLVDV (178 aa)). The 6-(S-cysteinyl)-8alpha-(pros-histidyl)-FAD (His-Cys) cross-link spans 109–171 (HDYEGLSFTS…KTLAFAGGVC (63 aa)). 3 N-linked (GlcNAc...) asparagine glycosylation sites follow: Asn256, Asn340, and Asn439.

Belongs to the oxygen-dependent FAD-linked oxidoreductase family. The cofactor is FAD. In terms of processing, the FAD cofactor is bound via a bicovalent 6-S-cysteinyl, 8alpha-N1-histidyl FAD linkage.

The protein resides in the secreted. Its subcellular location is the cell wall. The sequence is that of Berberine bridge enzyme-like 17 from Arabidopsis thaliana (Mouse-ear cress).